We begin with the raw amino-acid sequence, 174 residues long: Alpha-crystallin B chain (174 aa).

Position 1 is an N-acetylmethionine (M1). The sHSP domain maps to 55-163 (RMPSWLETGL…PERSIPITRE (109 aa)). Residues H82, H103, E105, and H110 each contribute to the Zn(2+) site. The tract at residues 148–174 (RKQSDVPERSIPITREEKPAIAGAQRK) is disordered. Basic and acidic residues predominate over residues 149–166 (KQSDVPERSIPITREEKP).

It belongs to the small heat shock protein (HSP20) family. Heteromer composed of three CRYAA and one CRYAB subunits. Aggregates with homologous proteins, including the small heat shock protein HSPB1, to form large heteromeric complexes. Inter-subunit bridging via zinc ions enhances stability, which is crucial as there is no protein turn over in the lens. In terms of tissue distribution, lens as well as other tissues.

Its function is as follows. May contribute to the transparency and refractive index of the lens. The polypeptide is Alpha-crystallin B chain (CRYAB) (Anas platyrhynchos (Mallard)).